Consider the following 98-residue polypeptide: Thrombin-like enzyme cerastotin (98 aa).

The region spanning valine 1–histidine 98 is the Peptidase S1 domain. Catalysis depends on charge relay system residues histidine 41 and aspartate 85. The N-linked (GlcNAc...) asparagine glycan is linked to asparagine 94.

It belongs to the peptidase S1 family. Snake venom subfamily. In terms of assembly, monomer. As to expression, expressed by the venom gland.

Its subcellular location is the secreted. With respect to regulation, inhibited by PMSF. Thrombin-like snake venom serine protease that preferentially cleaves the alpha-chain of fibrinogen (FGA). Induce platelet aggregation in the presence of exogenous fibrinogen. Possesses esterase and amidolytic activities. The protein is Thrombin-like enzyme cerastotin of Cerastes cerastes (Horned desert viper).